The primary structure comprises 635 residues: Leucine aminopeptidase 2-2 (635 aa).

Residues 141–143 and 265–270 contribute to the substrate site; these read QCQ and PYGGME. H294 provides a ligand contact to Zn(2+). The active-site Proton acceptor is the E295. Zn(2+)-binding residues include H298 and E317. Residue Y399 is the Proton donor of the active site.

The protein belongs to the peptidase M1 family. It depends on Zn(2+) as a cofactor.

It localises to the cytoplasm. Its subcellular location is the nucleus. The catalysed reaction is an epoxide + H2O = an ethanediol. Functionally, aminopeptidase that preferentially cleaves di- and tripeptides. Also has low epoxide hydrolase activity (in vitro). Can hydrolyze the epoxide leukotriene LTA(4) but it forms preferentially 5,6-dihydroxy-7,9,11,14-eicosatetraenoic acid rather than the cytokine leukotriene B(4) as the product compared to the homologous mammalian enzyme (in vitro). This is Leucine aminopeptidase 2-2 (LTA4) from Scheffersomyces stipitis (strain ATCC 58785 / CBS 6054 / NBRC 10063 / NRRL Y-11545) (Yeast).